The sequence spans 827 residues: MSPSIKKLDCFSPMLCHCKVACTNSTISLMFGCKKYRHQDEDTGSPQEPSSPQFTDDTPGPELVQVAEKSLSQIENVHGFVAHSHISPMKVESLECIFDGPSPVVKEESPPSPSTPLSNPYPQSPVSVQANPPPVVVNTESLDSAPYVNGTEADFEYEEITLERGNSGLGFSIAGGTDNPHIGEDPSIFITKVIPGGAAAQDGRLRVNDVILRVNEVDVRDVTHSKAVEALKEAGSLVRLYVRRRKSASEKVMEIKLIKGPKGLGFSIAGGVGNQHIPGDNSIYVTKIIEGGAAHKDGRLQIGDKLLAVNSSCLEEVTHEHAVTALKNTPDVVYLKVAKPNSVFMNDSFAPPDITNSYSQHMENHISPPSYLSQPLPPVHSGRFSPTPKTTVGDDDVTREPRKVVLHRGTTGLGFNIVGGEDGEGIFISFILAGGPADLCGELRKGDRLVSVNGIDLRGATHEQAAAALKNAGQTVTIVAQYRPEEYSRFEAKIHDLREQMMNSSISSGSGSLRTSQKRSLYVRALFDYDKTKDSGLPSQGLNFKFGDILHVVNASDDEWWQARQVTAQGEVEEMGVIPSKRRVEKKERARLKTVKFNSKSREKGDNPDDMLSKGQSGQEEYVLSYEPVSQQEVNYSRPVIILGPMKDRVNDDLISEFPDKFGSCVPHTTRPKRDYEVDGRDYHFVVSREQMERDIQEHKFIEAGQYNSHLYGTSVQSVREVAEKGKHCILDVSGNAIKRLQVAMLYPIGIFIKPKSVENIMEMNKRLTEEQGRKTYDRAMKLEQEFMEHFTAIVQGDTLEEIYDQVKQIIEEQSGPYIWVQSKEKL.

Disordered stretches follow at residues 38–61 and 102–133; these read HQDE…TPGP and SPVV…ANPP. Over residues 44–56 the composition is skewed to polar residues; the sequence is GSPQEPSSPQFTD. PDZ domains lie at 159 to 246, 254 to 341, and 403 to 484; these read EITL…RRRK, EIKL…AKPN, and KVVL…QYRP. The 71-residue stretch at 518 to 588 folds into the SH3 domain; it reads KRSLYVRALF…PSKRRVEKKE (71 aa). The segment at 595–618 is disordered; sequence VKFNSKSREKGDNPDDMLSKGQSG. The region spanning 637–812 is the Guanylate kinase-like domain; the sequence is SRPVIILGPM…IYDQVKQIIE (176 aa).

Belongs to the MAGUK family.

The protein localises to the membrane. Functionally, may play a role in synapse assembly and function. The polypeptide is Discs large homolog 1-like protein (dlg1l) (Danio rerio (Zebrafish)).